A 502-amino-acid chain; its full sequence is Chlorophyllide reductase 52.5 kDa chain (502 aa).

3 consecutive transmembrane segments (helical) span residues 70–87, 131–147, and 221–238; these read VGTI…LSFV, AIVV…GVPL, and VMIG…GPVV.

The protein belongs to the BchN/ChlN family. As to quaternary structure, chlorophyllide reductase is composed of three subunits; BchX, BchY and BchZ. Forms a heterodimer of one BchY and one BchZ subunit.

The protein resides in the cell membrane. The catalysed reaction is 3-deacetyl-3-vinylbacteriochlorophyllide a + 2 oxidized [2Fe-2S]-[ferredoxin] + ADP + phosphate = chlorophyllide a + 2 reduced [2Fe-2S]-[ferredoxin] + ATP + H2O + H(+). It catalyses the reaction bacteriochlorophyllide a + 2 oxidized [2Fe-2S]-[ferredoxin] + ADP + phosphate = 3-acetyl-3-devinylchlorophyllide a + 2 reduced [2Fe-2S]-[ferredoxin] + ATP + H2O + H(+). It carries out the reaction 3-deacetyl-3-(1-hydroxyethyl)bacteriochlorophyllide a + 2 oxidized [2Fe-2S]-[ferredoxin] + ADP + phosphate = 3-devinyl-3-(1-hydroxyethyl)chlorophyllide a + 2 reduced [2Fe-2S]-[ferredoxin] + ATP + H2O + H(+). Its pathway is porphyrin-containing compound metabolism; bacteriochlorophyll biosynthesis (light-independent). Functionally, converts chlorophylls (Chl) into bacteriochlorophylls (BChl) by reducing ring B of the tetrapyrrole. In Cereibacter sphaeroides (strain ATCC 17023 / DSM 158 / JCM 6121 / CCUG 31486 / LMG 2827 / NBRC 12203 / NCIMB 8253 / ATH 2.4.1.) (Rhodobacter sphaeroides), this protein is Chlorophyllide reductase 52.5 kDa chain (bchY).